The following is a 262-amino-acid chain: Small ribosomal subunit protein eS4 (262 aa).

Residues 42 to 105 (LPLVVFLRNR…NEHFRLVYDV (64 aa)) enclose the S4 RNA-binding domain. Residues 178–211 (GRLVMVTGGRNLGRVGVIVHREKHEGGFDLVHIK) form the KOW domain.

This sequence belongs to the eukaryotic ribosomal protein eS4 family. In terms of assembly, component of the small ribosomal subunit. Mature ribosomes consist of a small (40S) and a large (60S) subunit. The 40S subunit contains about 32 different proteins and 1 molecule of RNA (18S). The 60S subunit contains 45 different proteins and 3 molecules of RNA (25S, 5.8S and 5S).

The protein localises to the cytoplasm. Functionally, component of the ribosome, a large ribonucleoprotein complex responsible for the synthesis of proteins in the cell. The small ribosomal subunit (SSU) binds messenger RNAs (mRNAs) and translates the encoded message by selecting cognate aminoacyl-transfer RNA (tRNA) molecules. The large subunit (LSU) contains the ribosomal catalytic site termed the peptidyl transferase center (PTC), which catalyzes the formation of peptide bonds, thereby polymerizing the amino acids delivered by tRNAs into a polypeptide chain. The nascent polypeptides leave the ribosome through a tunnel in the LSU and interact with protein factors that function in enzymatic processing, targeting, and the membrane insertion of nascent chains at the exit of the ribosomal tunnel. The protein is Small ribosomal subunit protein eS4 (RPS42) of Candida albicans (strain SC5314 / ATCC MYA-2876) (Yeast).